Consider the following 131-residue polypeptide: Large ribosomal subunit protein eL32 (131 aa).

This sequence belongs to the eukaryotic ribosomal protein eL32 family.

The sequence is that of Large ribosomal subunit protein eL32 (RPL32) from Candida glabrata (strain ATCC 2001 / BCRC 20586 / JCM 3761 / NBRC 0622 / NRRL Y-65 / CBS 138) (Yeast).